A 261-amino-acid chain; its full sequence is Leucine-rich repeat-containing protein 18 (261 aa).

7 LRR repeats span residues 28 to 49, 51 to 72, 74 to 95, 97 to 118, 122 to 144, 145 to 167, and 168 to 189; these read GKKRLDLSKMGITTFPKCILRL, DMDELDLSRNLIRKIPDSISKF, NLRWLDLHSNYIDKLPESIGQM, SLLYLNVSNNRLTSNGLPVELK, NIRAVNLGLNHLDSVPTTLGALK, ELHEVGLHDNLLNNIPVSISKLP, and KLKKLNIKRNPFPKPGESEIFI.

The protein localises to the cytoplasm. Its function is as follows. May be involved in the regulation of spermatogenesis and sperm maturation. This Homo sapiens (Human) protein is Leucine-rich repeat-containing protein 18 (LRRC18).